The primary structure comprises 226 residues: PKHD-type hydroxylase PST_0995 (226 aa).

The Fe2OG dioxygenase domain maps to 78–178 (KVFPPLFNCY…RLASFFWIQS (101 aa)). Positions 96, 98, and 159 each coordinate Fe cation. Residue Arg169 participates in 2-oxoglutarate binding.

Fe(2+) is required as a cofactor. Requires L-ascorbate as cofactor.

This chain is PKHD-type hydroxylase PST_0995, found in Stutzerimonas stutzeri (strain A1501) (Pseudomonas stutzeri).